The primary structure comprises 268 residues: Hydroxypyruvate/pyruvate aldolase (268 aa).

Histidine 48 functions as the Proton acceptor in the catalytic mechanism. Positions 152 and 178 each coordinate a divalent metal cation.

This sequence belongs to the HpcH/HpaI aldolase family. Requires Mn(2+) as cofactor. Mg(2+) is required as a cofactor. The cofactor is Co(2+).

The enzyme catalyses D-glyceraldehyde + 3-hydroxypyruvate = (3R,4S,5R)-3,4,5,6-tetrahydroxy-2-oxohexanoate. It catalyses the reaction D-glyceraldehyde + 3-hydroxypyruvate = 2-dehydro-D-gluconate. The catalysed reaction is D-glyceraldehyde + 3-hydroxypyruvate = 2-dehydro-D-galactonate. It carries out the reaction D-glyceraldehyde + pyruvate = 2-dehydro-3-deoxy-L-galactonate. The enzyme catalyses 2-dehydro-3-deoxy-D-gluconate = D-glyceraldehyde + pyruvate. Functionally, aldolase which can catalyze in vitro the aldolisation reaction between hydroxypyruvate (HPA) or pyruvate (PA) and D-glyceraldehyde (D-GA). The condensation of hydroxypyruvate and D-glyceraldehyde produces (3R,4S,5R)-3,4,5,6-tetrahydroxy-2-oxohexanoate as the major product, 2-dehydro-D-gluconate and 2-dehydro-D-galactonate. The condensation of pyruvate and D-glyceraldehyde produces 2-dehydro-3-deoxy-L-galactonate as the major product and 2-dehydro-3-deoxy-D-gluconate. Also catalyzes the retro-aldol type decarboxylation of oxaloacetate, a general property of known pyruvate aldolases. The chain is Hydroxypyruvate/pyruvate aldolase from Pseudomonas aeruginosa.